Here is a 257-residue protein sequence, read N- to C-terminus: tRNA dimethylallyltransferase (257 aa).

15-22 contributes to the ATP binding site; it reads GPTASGKS. 17–22 contributes to the substrate binding site; that stretch reads TASGKS.

It belongs to the IPP transferase family. Monomer. Requires Mg(2+) as cofactor.

It catalyses the reaction adenosine(37) in tRNA + dimethylallyl diphosphate = N(6)-dimethylallyladenosine(37) in tRNA + diphosphate. Its function is as follows. Catalyzes the transfer of a dimethylallyl group onto the adenine at position 37 in tRNAs that read codons beginning with uridine, leading to the formation of N6-(dimethylallyl)adenosine (i(6)A). This is tRNA dimethylallyltransferase from Oenococcus oeni (strain ATCC BAA-331 / PSU-1).